Here is a 46-residue protein sequence, read N- to C-terminus: Apamin (46 aa).

The first 27 residues, 1-27, serve as a signal peptide directing secretion; that stretch reads MISMLRCIYLFLSVILITSYFVTPVMP. Cystine bridges form between cysteine 28–cysteine 38 and cysteine 30–cysteine 42. Positions 40–41 are essential for toxin activity; sequence RR. The residue at position 45 (histidine 45) is a Histidine amide.

As to expression, expressed by the venom gland.

The protein resides in the secreted. Toxin with unique selectivity to KCa2 channels. Potently blocks human, rat and mouse KCa2.2/KCNN2/SK2 channels (IC(50)=27-140 pM), and moderately blocks human and rat KCa2.3/KCNN3/SK3 channels (IC(50)=0.6-4 nM), and human (IC(50)=0.7-12 nM) and mouse (IC(50)=28 nM) KCa2.1/KCNN1/SK1 channels. Does not show any antimicrobial activity. In vivo, intracerebroventricular injection into rats of a dose of 1 ng results in neurodegeneration specifically in the Purkinje cells of the cerebellum, and induces seizures characterized by hypersensitivity to noise, loss of postural control, paroxystic jerking, and alternating periods of great agitation with tonic-clonic convulsions and periods of total prostration. When administered at high doses, exerts anti-inflammatory, anti-oxidative, anti-fibrotic and anti-apoptotic properties in several models of inflammatory disease, including gouty arthritis, atherosclerosis, atopic dermatitis and acute kidney injury. Down-regulates pro-inflammatory signaling pathways, such as the NF-kappaB and STAT3 pathways, probably by blocking SK channels such as KCa2.2/KCNN2/SK2 and/or KCa2.3/KCNN3/SK3 which are thought to be involved in promoting some inflammatory responses. For example in mouse and rat microglia cells, inhibits LPS-activated KCa2.2/KCNN2/SK2 channels and TLR4 expression leading to the down-regulation of the NF-kappaB, STAT, and MAPK/ERK signaling pathways and, as a consequence, decreases secretion of pro-inflammatory cytokines. This Apis mellifera (Honeybee) protein is Apamin.